We begin with the raw amino-acid sequence, 154 residues long: MRLQILAVGRLKDGPERDLTDDYIRRASAMARGLGFKGPEEAEIASGGGMDAEGARLLARIPEGARIIRLDEGGENLTSEAFASRLSRWRDDGERDTCFLIGGAEGYAPDVRAAAPQTLAFGVQTWPHRLVRAMLAEQLYRAMTILAGTPYHKA.

S-adenosyl-L-methionine is bound by residues Leu70 and Gly102.

It belongs to the RNA methyltransferase RlmH family. Homodimer.

It is found in the cytoplasm. The catalysed reaction is pseudouridine(1915) in 23S rRNA + S-adenosyl-L-methionine = N(3)-methylpseudouridine(1915) in 23S rRNA + S-adenosyl-L-homocysteine + H(+). Specifically methylates the pseudouridine at position 1915 (m3Psi1915) in 23S rRNA. The polypeptide is Ribosomal RNA large subunit methyltransferase H (Hyphomonas neptunium (strain ATCC 15444)).